Reading from the N-terminus, the 29-residue chain is Vodo peptide N (29 aa).

The cyclopeptide (Gly-Asn) cross-link spans 1 to 29; that stretch reads GLPVCGETCTLGKCYTAGCSCSWPVCYRN. 3 cysteine pairs are disulfide-bonded: Cys-5-Cys-19, Cys-9-Cys-21, and Cys-14-Cys-26.

This is a cyclic peptide.

Functionally, probably participates in a plant defense mechanism. This Viola odorata (Sweet violet) protein is Vodo peptide N.